A 68-amino-acid polypeptide reads, in one-letter code: Conotoxin Cal12.1p1 (68 aa).

The propeptide occupies 1–23; the sequence is DLITNSYTRGKPRHVTSWRNLRT.

In terms of processing, contains 4 disulfide bonds. Expressed by the venom duct.

It localises to the secreted. This is Conotoxin Cal12.1p1 from Californiconus californicus (California cone).